The chain runs to 488 residues: ATP synthase subunit beta (488 aa).

164–171 (GGAGVGKT) contacts ATP.

Belongs to the ATPase alpha/beta chains family. As to quaternary structure, F-type ATPases have 2 components, CF(1) - the catalytic core - and CF(0) - the membrane proton channel. CF(1) has five subunits: alpha(3), beta(3), gamma(1), delta(1), epsilon(1). CF(0) has four main subunits: a(1), b(1), b'(1) and c(9-12).

The protein localises to the cellular thylakoid membrane. The enzyme catalyses ATP + H2O + 4 H(+)(in) = ADP + phosphate + 5 H(+)(out). Produces ATP from ADP in the presence of a proton gradient across the membrane. The catalytic sites are hosted primarily by the beta subunits. This Prochlorococcus marinus (strain NATL2A) protein is ATP synthase subunit beta.